A 185-amino-acid chain; its full sequence is 16S rRNA aminocarboxypropyltransferase (185 aa).

S-adenosyl-L-methionine contacts are provided by T19, I69, L93, Y108, and T112.

The protein belongs to the TDD superfamily. TSR3 family.

It localises to the cytoplasm. It catalyses the reaction an N(1)-methylpseudouridine in rRNA + S-adenosyl-L-methionine = N(1)-methyl-N(3)-[(3S)-3-amino-3-carboxypropyl]pseudouridine in rRNA + S-methyl-5'-thioadenosine + H(+). In terms of biological role, aminocarboxypropyltransferase that catalyzes the aminocarboxypropyl transfer on pseudouridine corresponding to position 914 in M.jannaschii 16S rRNA. It constitutes the last step in biosynthesis of the hypermodified N1-methyl-N3-(3-amino-3-carboxypropyl) pseudouridine (m1acp3-Psi). The protein is 16S rRNA aminocarboxypropyltransferase of Vulcanisaeta distributa (strain DSM 14429 / JCM 11212 / NBRC 100878 / IC-017).